Consider the following 195-residue polypeptide: Urease accessory protein UreG (195 aa).

G9 to T16 is a GTP binding site.

This sequence belongs to the SIMIBI class G3E GTPase family. UreG subfamily. In terms of assembly, homodimer. UreD, UreF and UreG form a complex that acts as a GTP-hydrolysis-dependent molecular chaperone, activating the urease apoprotein by helping to assemble the nickel containing metallocenter of UreC. The UreE protein probably delivers the nickel.

It localises to the cytoplasm. Facilitates the functional incorporation of the urease nickel metallocenter. This process requires GTP hydrolysis, probably effectuated by UreG. This is Urease accessory protein UreG from Aliarcobacter butzleri (strain RM4018) (Arcobacter butzleri).